Consider the following 1593-residue polypeptide: DNA-directed RNA polymerase subunit beta' (1593 aa).

Residues C74, C76, C89, and C92 each coordinate Zn(2+). Positions 648, 650, and 652 each coordinate Mg(2+). Residues C1026, C1100, C1107, and C1110 each coordinate Zn(2+).

Belongs to the RNA polymerase beta' chain family. The RNAP catalytic core consists of 2 alpha, 1 beta, 1 beta' and 1 omega subunit. When a sigma factor is associated with the core the holoenzyme is formed, which can initiate transcription. It depends on Mg(2+) as a cofactor. Requires Zn(2+) as cofactor.

The catalysed reaction is RNA(n) + a ribonucleoside 5'-triphosphate = RNA(n+1) + diphosphate. DNA-dependent RNA polymerase catalyzes the transcription of DNA into RNA using the four ribonucleoside triphosphates as substrates. The polypeptide is DNA-directed RNA polymerase subunit beta' (Endomicrobium trichonymphae).